A 233-amino-acid chain; its full sequence is Lipoprotein-releasing system ATP-binding protein LolD (233 aa).

The ABC transporter domain occupies 10 to 233; it reads YRLEGVGKEY…AGELYDQHRP (224 aa). 46-53 provides a ligand contact to ATP; the sequence is GASGSGKS.

It belongs to the ABC transporter superfamily. Lipoprotein translocase (TC 3.A.1.125) family. As to quaternary structure, the complex is composed of two ATP-binding proteins (LolD) and two transmembrane proteins (LolC and LolE).

Its subcellular location is the cell inner membrane. Part of the ABC transporter complex LolCDE involved in the translocation of mature outer membrane-directed lipoproteins, from the inner membrane to the periplasmic chaperone, LolA. Responsible for the formation of the LolA-lipoprotein complex in an ATP-dependent manner. The sequence is that of Lipoprotein-releasing system ATP-binding protein LolD from Nitratidesulfovibrio vulgaris (strain ATCC 29579 / DSM 644 / CCUG 34227 / NCIMB 8303 / VKM B-1760 / Hildenborough) (Desulfovibrio vulgaris).